The sequence spans 1236 residues: ESX-4 secretion system protein EccC4 (1236 aa).

The next 2 helical transmembrane spans lie at 32 to 52 (LLPVVMSVATVGVMVTVFLPG) and 59 to 79 (PTFLAFPMMMLVSLVVTAVTG). FtsK domains lie at 407-607 (GTAV…SESR), 747-936 (RVPL…ADSE), and 1018-1201 (GQPV…DEGA). Residues 430–437 (GATGSGKS), 765–772 (GAPQTGKS), and 1035–1042 (GDNECGKT) contribute to the ATP site.

In terms of assembly, part of the ESX-4 / type VII secretion system (T7SS), which is composed of cytosolic and membrane components.

Its subcellular location is the cell membrane. The sequence is that of ESX-4 secretion system protein EccC4 (eccC4) from Mycobacterium tuberculosis (strain ATCC 25618 / H37Rv).